Here is a 678-residue protein sequence, read N- to C-terminus: ABC transporter B family member 6 (678 aa).

A run of 6 helical transmembrane segments spans residues 95–115 (IILC…VPLI), 128–148 (EWHL…IWDI), 206–226 (LLFN…FLLF), 230–250 (AEFA…TLYV), 314–334 (FLLN…GLGL), and 346–366 (LGDV…LSWL). The region spanning 95 to 375 (IILCVSIIFF…LGSSYRMILT (281 aa)) is the ABC transmembrane type-1 domain. The 243-residue stretch at 418–660 (IEFRNISFTY…NGDYAHLWNQ (243 aa)) folds into the ABC transporter domain. Residues tyrosine 427 and 459–470 (GSTGGGKSTIFR) each bind ATP.

This sequence belongs to the ABC transporter superfamily. ABCB family. Heavy Metal importer (TC 3.A.1.210) subfamily.

The protein resides in the membrane. This is ABC transporter B family member 6 (abcB6) from Dictyostelium discoideum (Social amoeba).